The chain runs to 306 residues: tRNA N6-adenosine threonylcarbamoyltransferase (306 aa).

Positions 110 and 114 each coordinate Fe cation. Substrate is bound by residues 132–136 (IASGK), aspartate 165, glycine 178, aspartate 182, and asparagine 268. Aspartate 292 serves as a coordination point for Fe cation.

Belongs to the KAE1 / TsaD family. Fe(2+) serves as cofactor.

The protein localises to the cytoplasm. It catalyses the reaction L-threonylcarbamoyladenylate + adenosine(37) in tRNA = N(6)-L-threonylcarbamoyladenosine(37) in tRNA + AMP + H(+). Its function is as follows. Required for the formation of a threonylcarbamoyl group on adenosine at position 37 (t(6)A37) in tRNAs that read codons beginning with adenine. Is involved in the transfer of the threonylcarbamoyl moiety of threonylcarbamoyl-AMP (TC-AMP) to the N6 group of A37, together with TsaE and TsaB. TsaD likely plays a direct catalytic role in this reaction. The chain is tRNA N6-adenosine threonylcarbamoyltransferase from Malacoplasma penetrans (strain HF-2) (Mycoplasma penetrans).